The chain runs to 356 residues: Terpene synthase 10 (356 aa).

The short motif at 90 to 95 is the DDxx(x)D/E motif element; that stretch reads DDYLDS. An NDxxSxxxD/E motif motif is present at residues 232-240; the sequence is NDAVSYAKE.

This sequence belongs to the terpene synthase family.

It catalyses the reaction geranylgeranyl diphosphate = beta-araneosene + diphosphate. In terms of biological role, terpene synthase that converts its substrate farnesyl diphosphate (FPP) into several unidentified sesquiterpenes. TPS10 also converts geranylgeranyl diphosphate (GGPP) into the diterpene beta-araneosene. The protein is Terpene synthase 10 of Dictyostelium purpureum (Slime mold).